We begin with the raw amino-acid sequence, 330 residues long: MNKTIYDITIVGGGPVGLFAAFYAGLRGVSVKIIESLSELGGQPAILYPEKKIYDIPGYPVITGRELIDKHIEQLERFKDSIEICLKEEVLSFEKVDDVFTIQTDKDQHLSRAIVFACGNGAFAPRLLGLENEENYADNNLFYNVTKLEQFAGKHVVICGGGDSAVDWANELDKIAASVAIVHRRDAFRAHEHSVDILKASGVRILTPYVPIGLNGDSQRVSSLVVQKVKGDEVIELPLDNLIVSFGFSTSNKNLRYWNLDYKRSSINVSSLFETTQEGVYAIGDAANYPGKVELIATGYGEAPVAINQAINYIYPDRDNRVVHSTSLIK.

Residues Glu-35, Gln-43, Tyr-48, Val-90, Phe-123, Asp-285, and Thr-326 each contribute to the FAD site.

The protein belongs to the ferredoxin--NADP reductase type 2 family. Homodimer. FAD is required as a cofactor.

The catalysed reaction is 2 reduced [2Fe-2S]-[ferredoxin] + NADP(+) + H(+) = 2 oxidized [2Fe-2S]-[ferredoxin] + NADPH. The polypeptide is Ferredoxin--NADP reductase (Streptococcus agalactiae serotype Ia (strain ATCC 27591 / A909 / CDC SS700)).